The following is a 50-amino-acid chain: Light-harvesting protein B-870 beta chain (50 aa).

The Cytoplasmic segment spans residues 2 to 22 (ADNTDLSFTGLTDEQAQELHS). Positions 21 and 39 each coordinate a bacteriochlorophyll. Residues 23 to 45 (VYMSGLFLFAAVAVVAHLATYIW) form a helical membrane-spanning segment. Residues 46–50 (RPWFG) lie on the Periplasmic side of the membrane.

It belongs to the antenna complex beta subunit family. In terms of assembly, the core complex is formed by different alpha and beta chains, binding bacteriochlorophyll molecules, and arranged most probably in tetrameric structures disposed around the reaction center. The non-pigmented gamma chains may constitute additional components.

The protein localises to the cell inner membrane. In terms of biological role, antenna complexes are light-harvesting systems, which transfer the excitation energy to the reaction centers. The sequence is that of Light-harvesting protein B-870 beta chain (pufB) from Roseobacter denitrificans (strain ATCC 33942 / OCh 114) (Erythrobacter sp. (strain OCh 114)).